The primary structure comprises 185 residues: Endoribonuclease YbeY (185 aa).

The Zn(2+) site is built by histidine 142, histidine 146, and histidine 152.

This sequence belongs to the endoribonuclease YbeY family. The cofactor is Zn(2+).

The protein localises to the cytoplasm. Single strand-specific metallo-endoribonuclease involved in late-stage 70S ribosome quality control and in maturation of the 3' terminus of the 16S rRNA. The sequence is that of Endoribonuclease YbeY from Parvibaculum lavamentivorans (strain DS-1 / DSM 13023 / NCIMB 13966).